Consider the following 312-residue polypeptide: Retron Ec83 reverse transcriptase (312 aa).

One can recognise a Reverse transcriptase domain in the interval Pro14–Leu239. Mg(2+) is bound by residues Asp97, Asp185, and Asp186.

This sequence belongs to the bacterial reverse transcriptase family.

The enzyme catalyses DNA(n) + a 2'-deoxyribonucleoside 5'-triphosphate = DNA(n+1) + diphosphate. In terms of biological role, reverse transcriptase (RT) component of antiviral defense system retron Ec83, composed of a non-coding RNA (ncRNA), this reverse transcriptase (RT), a probable ATPase and a putative HNH endonuclease. Expression of retron Ec83 confers protection against bacteriophages T2, T4 and T6. At multiplicity of infection (MOI) of 0.02 cultures slow growth when infected with T4 but do not collapse, at MOI 2 cultures enter growth stasis. Responsible for synthesis of msDNA-Ec83 (a linear ssDNA with a 5'-terminal phosphate residue). Unlike most known msDNAs the mature product from the original strain does not have an RNA component. When the ncRNA plus RT are expressed in strain K12 / JM109 only linear DNA is seen in stationary phase cells, but logarithmic phase cells have both a linear and branched msDNA (a branched molecule with RNA linked by a 2',5'-phosphodiester bond to ssDNA, a 'classic' retron). The branched msDNA is probably the precursor for the mature linear msDNA, the precursor is cleaved endonucleolytically by ExoVII (xseA-xseB) leaving the observed mature 5'-phosphate ssDNA terminus. The retron transcript serves as primer (from a conserved internal G residue) and template for the reaction, and codes for the RT. Overexpression of the ncRNA and RT, which leads to increased levels of msDNA, is mutagenic in vivo. This may be due to a mismatch in the msDNA stem which binds and sequesters MutS and/or MutL. The polypeptide is Retron Ec83 reverse transcriptase (Escherichia coli).